The following is a 382-amino-acid chain: Palmitoyltransferase ZDHHC16B (382 aa).

The Cytoplasmic segment spans residues 1–75 (MRSWRWSVSR…IYWLVDNMTR (75 aa)). The helical transmembrane segment at 76 to 96 (WFGVVFVCLVMALTSSVVVIV) threads the bilayer. The Lumenal segment spans residues 97–107 (YLCVLPIIFSS). A helical membrane pass occupies residues 108–130 (YPVYWILWHLCYGHWNLLMVVFH). The Cytoplasmic segment spans residues 131 to 196 (YYKATTTQPG…NNCVGHFNHR (66 aa)). The DHHC domain maps to 153–203 (TICKKCIVPKPARTHHCSICNRCILKMDHHCPWLNNCVGHFNHRYFFSFCL). Cys183 acts as the S-palmitoyl cysteine intermediate in catalysis. A helical membrane pass occupies residues 197–217 (YFFSFCLFMTMGCVYCSISAK). The Lumenal portion of the chain corresponds to 218–275 (DMFLDAYNAIESGRYKGGASQGEAVPGAGLIYISFQHQSSYQTPPPAFTHQERMVHKS). A helical transmembrane segment spans residues 276 to 296 (LVYLWVLTSSVAVALGALTLW). Over 297–382 (HAILITRGET…PAYKSSTTAI (86 aa)) the chain is Cytoplasmic.

This sequence belongs to the DHHC palmitoyltransferase family.

The protein resides in the endoplasmic reticulum membrane. It catalyses the reaction L-cysteinyl-[protein] + hexadecanoyl-CoA = S-hexadecanoyl-L-cysteinyl-[protein] + CoA. In terms of biological role, palmitoyl acyltransferase that mediates palmitoylation of proteins and is required during embryonic heart development. Involved in the proliferation of neural stem cells by regulating the FGF/ERK pathway. The chain is Palmitoyltransferase ZDHHC16B from Danio rerio (Zebrafish).